We begin with the raw amino-acid sequence, 203 residues long: FMN-dependent NADH:quinone oxidoreductase 3 (203 aa).

FMN is bound by residues serine 9, 15 to 17 (SAS), 95 to 98 (MYNF), and 139 to 142 (TAGG).

This sequence belongs to the azoreductase type 1 family. Homodimer. The cofactor is FMN.

It carries out the reaction 2 a quinone + NADH + H(+) = 2 a 1,4-benzosemiquinone + NAD(+). It catalyses the reaction N,N-dimethyl-1,4-phenylenediamine + anthranilate + 2 NAD(+) = 2-(4-dimethylaminophenyl)diazenylbenzoate + 2 NADH + 2 H(+). Quinone reductase that provides resistance to thiol-specific stress caused by electrophilic quinones. Functionally, also exhibits azoreductase activity. Catalyzes the reductive cleavage of the azo bond in aromatic azo compounds to the corresponding amines. The protein is FMN-dependent NADH:quinone oxidoreductase 3 of Pseudomonas fluorescens (strain Pf0-1).